A 275-amino-acid polypeptide reads, in one-letter code: Taurine transport system permease protein TauC (275 aa).

Helical transmembrane passes span 20–42 (LSRQ…WTVA), 87–107 (IMLA…AMGL), 124–144 (PVPP…GETS), 146–166 (ILLI…AGVK), 186–206 (VLWF…LRIG), 209–229 (VGWS…LGFM), and 236–256 (FLAT…AFLL). The region spanning 80–264 (LAASLTRIML…LLELGLRALQ (185 aa)) is the ABC transmembrane type-1 domain.

Belongs to the binding-protein-dependent transport system permease family. CysTW subfamily.

The protein localises to the cell inner membrane. In terms of biological role, part of a binding-protein-dependent transport system for taurine. Probably responsible for the translocation of the substrate across the membrane. The sequence is that of Taurine transport system permease protein TauC (tauC) from Escherichia coli (strain K12).